We begin with the raw amino-acid sequence, 170 residues long: Urease accessory protein UreE (170 aa).

This sequence belongs to the UreE family.

Its subcellular location is the cytoplasm. Involved in urease metallocenter assembly. Binds nickel. Probably functions as a nickel donor during metallocenter assembly. The sequence is that of Urease accessory protein UreE from Helicobacter pylori (strain J99 / ATCC 700824) (Campylobacter pylori J99).